Consider the following 250-residue polypeptide: tRNA (guanine-N(1)-)-methyltransferase (250 aa).

S-adenosyl-L-methionine is bound by residues G113 and I133 to L138.

The protein belongs to the RNA methyltransferase TrmD family. As to quaternary structure, homodimer.

The protein resides in the cytoplasm. It catalyses the reaction guanosine(37) in tRNA + S-adenosyl-L-methionine = N(1)-methylguanosine(37) in tRNA + S-adenosyl-L-homocysteine + H(+). In terms of biological role, specifically methylates guanosine-37 in various tRNAs. The sequence is that of tRNA (guanine-N(1)-)-methyltransferase from Shewanella amazonensis (strain ATCC BAA-1098 / SB2B).